Here is a 347-residue protein sequence, read N- to C-terminus: Extracellular metalloprotease (347 aa).

The signal sequence occupies residues Met-1–Ala-20. The interval Ser-43–Gln-68 is disordered. Zn(2+) is bound at residue His-162. Glu-163 is a catalytic residue. Residues His-166 and Glu-186 each coordinate Zn(2+). The Proton donor role is filled by His-264.

Belongs to the peptidase M4 family. The cofactor is Ca(2+). Zn(2+) is required as a cofactor.

Its subcellular location is the secreted. In Pectobacterium carotovorum subsp. carotovorum (Erwinia carotovora subsp. carotovora), this protein is Extracellular metalloprotease (prt1).